The chain runs to 1090 residues: UPF0507 protein EC1118_1M3_1541g (1090 aa).

One can recognise a VPS9 domain in the interval 289-436 (FSVNQLLTDF…FEDFNKNTGN (148 aa)).

It belongs to the UPF0507 family.

The chain is UPF0507 protein EC1118_1M3_1541g from Saccharomyces cerevisiae (strain Lalvin EC1118 / Prise de mousse) (Baker's yeast).